The sequence spans 487 residues: Cytochrome P450 2C16 (487 aa).

Cys-432 contributes to the heme binding site.

Belongs to the cytochrome P450 family. Requires heme as cofactor. Expressed constitutively in liver, lung, testes, and kidney.

The protein localises to the endoplasmic reticulum membrane. It is found in the microsome membrane. The catalysed reaction is an organic molecule + reduced [NADPH--hemoprotein reductase] + O2 = an alcohol + oxidized [NADPH--hemoprotein reductase] + H2O + H(+). In terms of biological role, cytochromes P450 are a group of heme-thiolate monooxygenases. In liver microsomes, this enzyme is involved in an NADPH-dependent electron transport pathway. It oxidizes a variety of structurally unrelated compounds, including steroids, fatty acids, and xenobiotics. This chain is Cytochrome P450 2C16 (CYP2C16), found in Oryctolagus cuniculus (Rabbit).